Here is a 299-residue protein sequence, read N- to C-terminus: Probable phosphate butyryltransferase (299 aa).

It belongs to the phosphate acetyltransferase and butyryltransferase family.

The enzyme catalyses butanoyl-CoA + phosphate = butanoyl phosphate + CoA. Functionally, catalyzes the conversion of butyryl-CoA through butyryl phosphate to butyrate. This chain is Probable phosphate butyryltransferase (yqiS), found in Bacillus subtilis (strain 168).